We begin with the raw amino-acid sequence, 488 residues long: Glutamyl-tRNA(Gln) amidotransferase subunit A (488 aa).

Active-site charge relay system residues include lysine 77 and serine 152. The active-site Acyl-ester intermediate is serine 176.

Belongs to the amidase family. GatA subfamily. In terms of assembly, heterotrimer of A, B and C subunits.

The catalysed reaction is L-glutamyl-tRNA(Gln) + L-glutamine + ATP + H2O = L-glutaminyl-tRNA(Gln) + L-glutamate + ADP + phosphate + H(+). Allows the formation of correctly charged Gln-tRNA(Gln) through the transamidation of misacylated Glu-tRNA(Gln) in organisms which lack glutaminyl-tRNA synthetase. The reaction takes place in the presence of glutamine and ATP through an activated gamma-phospho-Glu-tRNA(Gln). The polypeptide is Glutamyl-tRNA(Gln) amidotransferase subunit A (Streptococcus pneumoniae (strain ATCC 700669 / Spain 23F-1)).